We begin with the raw amino-acid sequence, 476 residues long: MKKQNLNSILLMYINYIINYFNNIHKNQLKKDWIMEYEYMYKFLMNNMTCFIKWDNNKILLLLDMYYNVLYNYHKQRTPMSNKRLMNSKNIMDYKLLYTYFYILNKMKMEMDNYNNNNNNISLKYNELLKNIMNNLNYKTSNIETNLSNNFYLMDKYLINKYMKYLDMLNMIPNNYMFNNINYKGKLNIKTVLDLNNNEFYDYLSGLIEGDGYIGPGGITITNHANDVLNTIFINKRIKNSILVEKWMDTLKDNPYFVNAFSINIKTNLAKEKIFTNIYNKLYSDYKINQINNHIPYYNYLKINNKLPIKNIMDIKNNYWLAGFTAADGSFLSSMYNPKDTLLFKNMRPSYVISQVETRKELIYLIQESFDLSISNVKKVGNRKLKDFKLFTRTTDELMKFIYYFDKFLPLHDNKQFNYIKFRFNTFIKSYNWNNRVFGLVLSEYINNIKIDNYDYYYYNKYINMHNARKPKGYIK.

Belongs to the LAGLIDADG endonuclease family. Endonuclease SceI (Endo.SceI) is a heterodimer of ENS2 and SSC1. Post-translationally, the N-terminus is blocked.

The protein resides in the mitochondrion. Functionally, catalytic component of endonuclease SceI (Endo.SceI), which cleaves specifically at multiple sites on mitochondrial DNA and produces double-stranded breaks. The chain is Endonuclease SceI small subunit (ENS2) from Saccharomyces cerevisiae (Baker's yeast).